A 217-amino-acid chain; its full sequence is Large ribosomal subunit protein uL3 (217 aa).

Residues 127–162 (GFSRGPMSHGSKNHRAPGSTGAGTTPGRIYPGKRMA) form a disordered region. Residues 142-153 (APGSTGAGTTPG) show a composition bias toward low complexity.

Belongs to the universal ribosomal protein uL3 family. In terms of assembly, part of the 50S ribosomal subunit. Forms a cluster with proteins L14 and L19.

In terms of biological role, one of the primary rRNA binding proteins, it binds directly near the 3'-end of the 23S rRNA, where it nucleates assembly of the 50S subunit. This chain is Large ribosomal subunit protein uL3, found in Prochlorococcus marinus (strain MIT 9301).